The chain runs to 129 residues: Small ribosomal subunit protein uS12 (129 aa).

Residue Asp89 is modified to 3-methylthioaspartic acid. Residues Arg110–Lys129 form a disordered region.

It belongs to the universal ribosomal protein uS12 family. Part of the 30S ribosomal subunit. Contacts proteins S8 and S17. May interact with IF1 in the 30S initiation complex.

In terms of biological role, with S4 and S5 plays an important role in translational accuracy. Its function is as follows. Interacts with and stabilizes bases of the 16S rRNA that are involved in tRNA selection in the A site and with the mRNA backbone. Located at the interface of the 30S and 50S subunits, it traverses the body of the 30S subunit contacting proteins on the other side and probably holding the rRNA structure together. The combined cluster of proteins S8, S12 and S17 appears to hold together the shoulder and platform of the 30S subunit. The protein is Small ribosomal subunit protein uS12 of Rickettsia bellii (strain RML369-C).